Consider the following 655-residue polypeptide: Probable replication restart protein PriA (655 aa).

8 residues coordinate Zn(2+): cysteine 368, cysteine 371, cysteine 377, cysteine 380, cysteine 396, cysteine 399, cysteine 408, and cysteine 411.

The protein belongs to the helicase family. PriA subfamily. Component of the replication restart primosome. Requires Zn(2+) as cofactor.

Initiates the restart of stalled replication forks, which reloads the replicative helicase on sites other than the origin of replication. Recognizes and binds to abandoned replication forks and remodels them to uncover a helicase loading site. Promotes assembly of the primosome at these replication forks. The sequence is that of Probable replication restart protein PriA from Mycobacterium bovis (strain ATCC BAA-935 / AF2122/97).